We begin with the raw amino-acid sequence, 369 residues long: Homoserine O-acetyltransferase (369 aa).

Residues 44–350 (NAILVAHAWT…AYGHDAFLLE (307 aa)) enclose the AB hydrolase-1 domain. The Nucleophile role is filled by S150. R217 contributes to the substrate binding site. Residues D311 and H344 contribute to the active site. A substrate-binding site is contributed by D345.

The protein belongs to the AB hydrolase superfamily. MetX family. Homodimer.

Its subcellular location is the cytoplasm. The catalysed reaction is L-homoserine + acetyl-CoA = O-acetyl-L-homoserine + CoA. It participates in amino-acid biosynthesis; L-methionine biosynthesis via de novo pathway; O-acetyl-L-homoserine from L-homoserine: step 1/1. Transfers an acetyl group from acetyl-CoA to L-homoserine, forming acetyl-L-homoserine. The chain is Homoserine O-acetyltransferase from Geobacter metallireducens (strain ATCC 53774 / DSM 7210 / GS-15).